The chain runs to 366 residues: Ribosomal RNA large subunit methyltransferase M (366 aa).

S-adenosyl-L-methionine-binding positions include S187, 220–223 (SPGG), D239, D259, and D276. Residue K305 is the Proton acceptor of the active site.

This sequence belongs to the class I-like SAM-binding methyltransferase superfamily. RNA methyltransferase RlmE family. RlmM subfamily. In terms of assembly, monomer.

Its subcellular location is the cytoplasm. It catalyses the reaction cytidine(2498) in 23S rRNA + S-adenosyl-L-methionine = 2'-O-methylcytidine(2498) in 23S rRNA + S-adenosyl-L-homocysteine + H(+). Its function is as follows. Catalyzes the 2'-O-methylation at nucleotide C2498 in 23S rRNA. This chain is Ribosomal RNA large subunit methyltransferase M, found in Tolumonas auensis (strain DSM 9187 / NBRC 110442 / TA 4).